We begin with the raw amino-acid sequence, 460 residues long: V-type ATP synthase beta chain (460 aa).

It belongs to the ATPase alpha/beta chains family.

Produces ATP from ADP in the presence of a proton gradient across the membrane. The V-type beta chain is a regulatory subunit. This chain is V-type ATP synthase beta chain, found in Clostridium perfringens (strain ATCC 13124 / DSM 756 / JCM 1290 / NCIMB 6125 / NCTC 8237 / Type A).